The primary structure comprises 213 residues: Orotate phosphoribosyltransferase (213 aa).

Lys26 contacts 5-phospho-alpha-D-ribose 1-diphosphate. Position 34 to 35 (34 to 35) interacts with orotate; it reads FF. Residues 72 to 73, Arg99, Lys100, Lys103, His105, and 124 to 132 each bind 5-phospho-alpha-D-ribose 1-diphosphate; these read YK and DDVITAGTA. Thr128 and Arg156 together coordinate orotate.

It belongs to the purine/pyrimidine phosphoribosyltransferase family. PyrE subfamily. As to quaternary structure, homodimer. Requires Mg(2+) as cofactor.

It carries out the reaction orotidine 5'-phosphate + diphosphate = orotate + 5-phospho-alpha-D-ribose 1-diphosphate. Its pathway is pyrimidine metabolism; UMP biosynthesis via de novo pathway; UMP from orotate: step 1/2. Its function is as follows. Catalyzes the transfer of a ribosyl phosphate group from 5-phosphoribose 1-diphosphate to orotate, leading to the formation of orotidine monophosphate (OMP). The protein is Orotate phosphoribosyltransferase of Actinobacillus pleuropneumoniae serotype 5b (strain L20).